Consider the following 159-residue polypeptide: ATP synthase subunit b 2 (159 aa).

A helical transmembrane segment spans residues 1–21 (MDATFWAFIALVIFVAIVVYM).

The protein belongs to the ATPase B chain family. In terms of assembly, F-type ATPases have 2 components, F(1) - the catalytic core - and F(0) - the membrane proton channel. F(1) has five subunits: alpha(3), beta(3), gamma(1), delta(1), epsilon(1). F(0) has three main subunits: a(1), b(2) and c(10-14). The alpha and beta chains form an alternating ring which encloses part of the gamma chain. F(1) is attached to F(0) by a central stalk formed by the gamma and epsilon chains, while a peripheral stalk is formed by the delta and b chains.

Its subcellular location is the cell inner membrane. Its function is as follows. F(1)F(0) ATP synthase produces ATP from ADP in the presence of a proton or sodium gradient. F-type ATPases consist of two structural domains, F(1) containing the extramembraneous catalytic core and F(0) containing the membrane proton channel, linked together by a central stalk and a peripheral stalk. During catalysis, ATP synthesis in the catalytic domain of F(1) is coupled via a rotary mechanism of the central stalk subunits to proton translocation. Component of the F(0) channel, it forms part of the peripheral stalk, linking F(1) to F(0). The chain is ATP synthase subunit b 2 from Brucella suis (strain ATCC 23445 / NCTC 10510).